A 385-amino-acid polypeptide reads, in one-letter code: uncharacterized protein (385 aa).

The Zn(2+) site is built by Asp-180, His-258, and His-275.

Belongs to the iron-containing alcohol dehydrogenase family. Zn(2+) serves as cofactor.

This is an uncharacterized protein from Synechocystis sp. (strain ATCC 27184 / PCC 6803 / Kazusa).